A 318-amino-acid polypeptide reads, in one-letter code: MTTVPVTDIQNDLITEFSEDNYPSNKNYEITLRQMSILTHVNNVVDREHNAAVVSSPEEISSQLNEDLFPDDDSPATIIERVQPHTTIIDDTPPPTFRRELLISEQRQQREKRFNITVSKNSEAIMESRSMITSMPTQTPSLGVVYDKDKRIQMLEDEVVNLRNQRSNTKSSDNLDNFTRILFGKTPYKSTEVNKRIAIVNYANLNGSPLSVEDLDVCSEDEIDRIYKTIKQYHESRKRKIIVTNVIIIVINIIEQALLKLGFEEIKGLSTDITSEIIDVEIGDDCDAVASKLGIGNSPVLNIVLFILKIFVKRIKII.

It belongs to the orthopoxvirus OPG137 family. As to quaternary structure, homomultimer. Interacts with OPG160. Phosphorylated by a OPG054-independent mechanism.

The protein resides in the host cytoplasm. Functionally, required for viral crescent formation early during virus morphogenesis. This chain is Protein OPG137 (OPG137), found in Monkeypox virus.